The following is a 427-amino-acid chain: Gamma-glutamyl phosphate reductase (427 aa).

This sequence belongs to the gamma-glutamyl phosphate reductase family.

It is found in the cytoplasm. It carries out the reaction L-glutamate 5-semialdehyde + phosphate + NADP(+) = L-glutamyl 5-phosphate + NADPH + H(+). It participates in amino-acid biosynthesis; L-proline biosynthesis; L-glutamate 5-semialdehyde from L-glutamate: step 2/2. In terms of biological role, catalyzes the NADPH-dependent reduction of L-glutamate 5-phosphate into L-glutamate 5-semialdehyde and phosphate. The product spontaneously undergoes cyclization to form 1-pyrroline-5-carboxylate. This chain is Gamma-glutamyl phosphate reductase, found in Rhizobium johnstonii (strain DSM 114642 / LMG 32736 / 3841) (Rhizobium leguminosarum bv. viciae).